A 243-amino-acid polypeptide reads, in one-letter code: NAD(P)H-quinone oxidoreductase subunit K, chloroplastic (243 aa).

[4Fe-4S] cluster is bound by residues cysteine 65, cysteine 66, cysteine 130, and cysteine 161.

The protein belongs to the complex I 20 kDa subunit family. NDH is composed of at least 16 different subunits, 5 of which are encoded in the nucleus. [4Fe-4S] cluster is required as a cofactor.

It is found in the plastid. The protein localises to the chloroplast thylakoid membrane. It carries out the reaction a plastoquinone + NADH + (n+1) H(+)(in) = a plastoquinol + NAD(+) + n H(+)(out). It catalyses the reaction a plastoquinone + NADPH + (n+1) H(+)(in) = a plastoquinol + NADP(+) + n H(+)(out). In terms of biological role, NDH shuttles electrons from NAD(P)H:plastoquinone, via FMN and iron-sulfur (Fe-S) centers, to quinones in the photosynthetic chain and possibly in a chloroplast respiratory chain. The immediate electron acceptor for the enzyme in this species is believed to be plastoquinone. Couples the redox reaction to proton translocation, and thus conserves the redox energy in a proton gradient. This Marchantia polymorpha (Common liverwort) protein is NAD(P)H-quinone oxidoreductase subunit K, chloroplastic.